We begin with the raw amino-acid sequence, 702 residues long: Ribosomal RNA large subunit methyltransferase K/L (702 aa).

The region spanning 43-154 (LVYQSLMWSR…KETASIALDL (112 aa)) is the THUMP domain.

This sequence belongs to the methyltransferase superfamily. RlmKL family.

Its subcellular location is the cytoplasm. The catalysed reaction is guanosine(2445) in 23S rRNA + S-adenosyl-L-methionine = N(2)-methylguanosine(2445) in 23S rRNA + S-adenosyl-L-homocysteine + H(+). It catalyses the reaction guanosine(2069) in 23S rRNA + S-adenosyl-L-methionine = N(2)-methylguanosine(2069) in 23S rRNA + S-adenosyl-L-homocysteine + H(+). Specifically methylates the guanine in position 2445 (m2G2445) and the guanine in position 2069 (m7G2069) of 23S rRNA. The protein is Ribosomal RNA large subunit methyltransferase K/L of Escherichia coli O157:H7.